A 349-amino-acid polypeptide reads, in one-letter code: ATPase GET3 (349 aa).

Position 26–33 (26–33 (KGGVGKTT)) interacts with ATP. The active site involves Asp-57. Residues Glu-240 and Asn-267 each contribute to the ATP site. Residues Cys-280 and Cys-283 each coordinate Zn(2+).

This sequence belongs to the arsA ATPase family. Homodimer. Component of the Golgi to ER traffic (GET) complex, which is composed of GET1, GET2 and GET3. Within the complex, GET1 and GET2 form a heterotetramer which is stabilized by phosphatidylinositol binding and which binds to the GET3 homodimer. Interacts with the chloride channel protein GEF1.

The protein resides in the cytoplasm. It localises to the endoplasmic reticulum. It is found in the golgi apparatus. Functionally, ATPase required for the post-translational delivery of tail-anchored (TA) proteins to the endoplasmic reticulum. Recognizes and selectively binds the transmembrane domain of TA proteins in the cytosol. This complex then targets to the endoplasmic reticulum by membrane-bound receptors GET1 and GET2, where the tail-anchored protein is released for insertion. This process is regulated by ATP binding and hydrolysis. ATP binding drives the homodimer towards the closed dimer state, facilitating recognition of newly synthesized TA membrane proteins. ATP hydrolysis is required for insertion. Subsequently, the homodimer reverts towards the open dimer state, lowering its affinity for the GET1-GET2 receptor, and returning it to the cytosol to initiate a new round of targeting. Cooperates with the HDEL receptor ERD2 to mediate the ATP-dependent retrieval of resident ER proteins that contain a C-terminal H-D-E-L retention signal from the Golgi to the ER. Involved in low-level resistance to the oxyanions arsenite and arsenate, and in heat tolerance. This Lachancea thermotolerans (strain ATCC 56472 / CBS 6340 / NRRL Y-8284) (Yeast) protein is ATPase GET3.